The primary structure comprises 158 residues: Cyclic pyranopterin monophosphate synthase (158 aa).

Residues 76 to 78 (MCH) and 114 to 115 (ME) contribute to the substrate site. Aspartate 129 is a catalytic residue.

The protein belongs to the MoaC family. Homohexamer; trimer of dimers.

It catalyses the reaction (8S)-3',8-cyclo-7,8-dihydroguanosine 5'-triphosphate = cyclic pyranopterin phosphate + diphosphate. It participates in cofactor biosynthesis; molybdopterin biosynthesis. Catalyzes the conversion of (8S)-3',8-cyclo-7,8-dihydroguanosine 5'-triphosphate to cyclic pyranopterin monophosphate (cPMP). This Clostridium perfringens (strain 13 / Type A) protein is Cyclic pyranopterin monophosphate synthase.